Here is a 995-residue protein sequence, read N- to C-terminus: DADLAAVYRAVASLADETVRTMAIPLLSTGTFAGGKDRVLQSLNHLFTALDTTDVDVTIYCRDKSWEKKIQEAIDMRTATELLDDDTTVMKELTRVHPDSCLVGRSGFSTVDGRLHSYLEGTRFHQTAVDVAERPTLWPRREEANEQITHYVLGESMEAIRTKCPVDDTDSSAPPCTVPCLCRYAMTPERVHRLRAAQVKQFTVCSSFPLPKYKIPGVQRVACSAVMLFNHDVPALVSPRKYREPSISSESSSSGLSVFDLDIGSDSEYEPMEPVQPEPLIDLAVVEETAPVRLERVAPVAAPRRARATPFTLEQRVVAPVPAPRTMPVRPPRRKKAATRTPERISFGDLDAECMAIINDDLTFGDFGAGEFERLTSAXLDRAGAYIFSSDTGPGHLQQRSVRQTRLADCVAEDVHEERVFAPKCDKEKERLLLLQMQMAPTEANKSRYQSRKVENMKAEVIDRLLGGAKLFVTPTTDCRYVTHKHPKPMYSTSVAFYLSSAKTAVAACNEFLSRNYPTVTSYQITDEYDAYLDMVDGSESCLDRAAFCPSKLRSFPKKHSYHRAEIRSAVPSPFQNTLQNVLAAATKRNCNVTQMRELPTLDSAVFNVECFKKYACNNDYWDEFAQKPIRLTTENITSYVTRLKGPKAAALFAKTYDLKPLQEVPMDRFVVDMKRDVKVTPGTKHTEERPKVQVIQAAEPLATAYLCGIHRELVRRLNAVLLPNVHTLFDMSAEDFDAIISEHFRPGDAVLETDIASFDKSQDDSLAYTGLMLLEDLGVDQPLLELIEASFGEITSTHLPTGTRFKFGAMMKSGMFLTLFVNTMLNMTIASRVLEERLTNSKCAAFIGDDNIVHGVKSDKLLAERCAAWMNMEVKIIDAVMCERPPYFCGGFIVFDQVTGTCCRVADPLKRLFKLGKPLPAEDKQDEDRRRALADEAQRWNRVGIQADLEAAMNSRYEVEGIRNVITALTTLSRNYHNFRHLRGPVIDLYGGPK.

The ADP-D-ribose site is built by glycine 30 and phenylalanine 32. Residues cysteine 180, cysteine 182, cysteine 205, and cysteine 223 each contribute to the Zn(2+) site. 2 consecutive short sequence motifs (FGDF; binding to host G3BP1) follow at residues 347-350 and 364-367; these read FGDL and FGDF. Residues 749 to 864 enclose the RdRp catalytic domain; it reads DAVLETDIAS…HGVKSDKLLA (116 aa).

Interacts with mRNA-capping enzyme nsP1. Interacts with host DDX1. Interacts with host DDX3. Interacts (via C-terminus) with host G3BP1; this interaction inhibits the formation of host stress granules on viral mRNAs and the nsp3-G3BP1 complexes bind viral RNAs and probably orchestrate the assembly of viral replication complexes. Interacts (via C-terminus) with host G3BP2; this interaction inhibits the formation of host stress granules on viral mRNAs and the nsp3-G3BP2 complexes bind viral RNAs and probably orchestrate the assembly of viral replication complexes. In terms of assembly, interacts with mRNA-capping enzyme nsP1. Interacts with protease nsP2. interacts with itself. Requires Mg(2+) as cofactor. Mn(2+) serves as cofactor. Post-translationally, polyprotein P1234: Specific enzymatic cleavages in vivo yield mature proteins. The processing of the polyprotein is temporally regulated. In early stages (1.7 hpi), P1234 is first cleaved in trans through its nsP2 protease activity, releasing P123' and nsP4, which associate to form the early replication complex. At the same time, P1234 is also cut at the nsP1/nsP2 site early in infection but with lower efficiency. After replication of the viral minus-strand RNAs (4 hpi), the polyproteins are cut at the nsP1/nsP2 and nsP2/nsP3 sites very efficiently, preventing accumulation of P123' and P1234 and allowing the formation of the late replication complex. NsP3'/nsP4 site is not cleaved anymore and P34 is produced rather than nsP4. Specific enzymatic cleavages in vivo yield mature proteins. The processing of the polyprotein is temporally regulated. In early stages (1.7 hpi), P123 is cleaved at the nsP1/nsP2 site with low efficiency. After replication of the viral minus-strand RNAs (4 hpi), the polyproteins are cut at the nsP1/nsP2 and nsP2/nsP3 sites very efficiently, preventing accumulation of P123 and allowing the formation of the late replication complex. In terms of processing, specific enzymatic cleavages in vivo yield mature proteins. The processing of the polyprotein is temporally regulated. In early stages (1.7 hpi), P123' is cleaved at the nsP1/nsP2 site with low efficiency. After replication of the viral minus-strand RNAs (4 hpi), the polyproteins are cut at the nsP1/nsP2 and nsP2/nsP3 sites very efficiently, preventing accumulation of P123' and allowing the formation of the late replication complex. Post-translationally, phosphorylated by host on serines and threonines. Ubiquitinated; targets the protein for rapid degradation via the ubiquitin system. Nsp4 is present in extremely low quantities due to low frequency of translation through the amber stop-codon and the degradation by the ubiquitin pathway.

It localises to the host cytoplasmic vesicle membrane. It catalyses the reaction RNA(n) + a ribonucleoside 5'-triphosphate = RNA(n+1) + diphosphate. It carries out the reaction RNA(n) + ATP = RNA(n)-3'-adenine ribonucleotide + diphosphate. The enzyme catalyses 4-O-(ADP-D-ribosyl)-L-aspartyl-[protein] + H2O = L-aspartyl-[protein] + ADP-D-ribose + H(+). The catalysed reaction is 5-O-(ADP-D-ribosyl)-L-glutamyl-[protein] + H2O = L-glutamyl-[protein] + ADP-D-ribose + H(+). It catalyses the reaction ADP-alpha-D-ribose 1''-phosphate + H2O = ADP-D-ribose + phosphate. Functionally, polyprotein P1234: Inactive precursor of the viral replicase, which is activated by cleavages carried out by the viral protease nsP2. The early replication complex formed by the polyprotein P123 and nsP4 synthesizes minus-strand RNAs. As soon P123 is cleaved into mature proteins, the plus-strand RNAs synthesis begins. Its function is as follows. The early replication complex formed by the polyprotein P123' and nsP4 synthesizes minus-strand RNAs. Polyprotein P123' is a short-lived polyprotein that accumulates during early stage of infection. As soon P123' is cleaved into mature proteins, the plus-strand RNAs synthesis begins. In terms of biological role, seems to be essential for minus-strand RNAs and subgenomic 26S mRNAs synthesis. Displays mono-ADP-ribosylhydrolase activity. ADP-ribosylation is a post-translational modification that controls various processes of the host cell and the virus probably needs to revert it for optimal viral replication. Binds proteins of FXR family and sequesters them into the viral RNA replication complexes thereby inhibiting the formation of host stress granules on viral mRNAs. The nsp3'-FXR complexes bind viral RNAs and probably orchestrate the assembly of viral replication complexes, thanks to the ability of FXR family members to self-assemble and bind DNA. Functionally, seems to be essential for minus-strand RNAs and subgenomic 26S mRNAs synthesis. Displays mono-ADP-ribosylhydrolase activity. ADP-ribosylation is a post-translantional modification that controls various processes of the host cell and the virus probably needs to revert it for optimal viral replication. Binds proteins of G3BP family and sequesters them into the viral RNA replication complexes thereby inhibiting the formation of host stress granules on viral mRNAs. The nsp3-G3BP complexes bind viral RNAs and probably orchestrate the assembly of viral replication complexes, thanks to the ability of G3BP family members to self-assemble and bind DNA. RNA dependent RNA polymerase. Replicates genomic and antigenomic RNA by recognizing replications specific signals. The early replication complex formed by the polyprotein P123 and nsP4 synthesizes minus-strand RNAs. The late replication complex composed of fully processed nsP1-nsP4 is responsible for the production of genomic and subgenomic plus-strand RNAs. The core catalytic domain of nsP4 also possesses terminal adenylyltransferase (TATase) activity that is probably involved in maintenance and repair of the poly(A) tail, an element required for replication of the viral genome. The polypeptide is Polyprotein nsP1234 (Middelburg virus).